The chain runs to 660 residues: Acetyl-coenzyme A synthetase (660 aa).

CoA-binding positions include 197 to 200 and threonine 317; that span reads RGGK. Residues 397–399, 421–426, aspartate 512, and arginine 528 each bind ATP; these read GEP and DTWWQT. Residue serine 536 coordinates CoA. Arginine 539 is an ATP binding site. Valine 550, histidine 552, and valine 555 together coordinate Mg(2+). Lysine 625 is modified (N6-acetyllysine).

The protein belongs to the ATP-dependent AMP-binding enzyme family. Requires Mg(2+) as cofactor. Acetylated. Deacetylation by the SIR2-homolog deacetylase activates the enzyme.

It carries out the reaction acetate + ATP + CoA = acetyl-CoA + AMP + diphosphate. Functionally, catalyzes the conversion of acetate into acetyl-CoA (AcCoA), an essential intermediate at the junction of anabolic and catabolic pathways. AcsA undergoes a two-step reaction. In the first half reaction, AcsA combines acetate with ATP to form acetyl-adenylate (AcAMP) intermediate. In the second half reaction, it can then transfer the acetyl group from AcAMP to the sulfhydryl group of CoA, forming the product AcCoA. The chain is Acetyl-coenzyme A synthetase from Burkholderia thailandensis (strain ATCC 700388 / DSM 13276 / CCUG 48851 / CIP 106301 / E264).